A 265-amino-acid polypeptide reads, in one-letter code: Glutamate 5-kinase (265 aa).

K15 contacts ATP. 3 residues coordinate substrate: S55, D142, and N158. ATP contacts are provided by residues 178 to 179 (SD) and 220 to 226 (TGGMVTK).

It belongs to the glutamate 5-kinase family.

Its subcellular location is the cytoplasm. The catalysed reaction is L-glutamate + ATP = L-glutamyl 5-phosphate + ADP. It functions in the pathway amino-acid biosynthesis; L-proline biosynthesis; L-glutamate 5-semialdehyde from L-glutamate: step 1/2. In terms of biological role, catalyzes the transfer of a phosphate group to glutamate to form L-glutamate 5-phosphate. The sequence is that of Glutamate 5-kinase from Lactiplantibacillus plantarum (strain ATCC BAA-793 / NCIMB 8826 / WCFS1) (Lactobacillus plantarum).